The primary structure comprises 1203 residues: MTNPSGHNLPANSVAESYEGEFGCTLMDLRKLMELRAADAVTQISAHYGSVQEICARLKTSPVEGLSGNPADLEKRRLVFGKNMIPPKKPKTFLELVWEALQDVTLIILEIAAIISLVLSFYRPPGGENEICGHIVSNPEEDEEGETGWIEGAAILASVIIVVFVTAFNDWSKEKQFRGLQSRIELEQKFSIIRNGQLIQLPVAEIVVGDIAQVKYGDLLPADGILIQGNDLKIDESSLTGESDHVKKTLDKDPMLLSGTHVMEGSGRMVVTAVGINSQTGIIFTLLGANEEEDDEKKKKGKKQGVSENRNKAKTQDGVALEIQPLNSQEGLDSEEKEKKASKGPKKEKSVLQGKLTRLAVQIGKAGLIMSILTVLILILYFVVDNFVIQRRAWLPECTPVYIQYFVKFFIIGVTVLVVAVPEGLPLAVTISLAYSVKKMMKDNNLVRHLDACETMGNATAICSDKTGTLTMNRMTVVQAYIGGTHYRQIPKPDDLPPNVLDLIVNSICINSAYTSKILPPEKEGGLPRQVGNKTECGLLGFVTDLKQDYQAVRSEMPEEKLFKVYTFNSVRKSMSTVIRKPEGGFRVFSKGASEIMLRKCDRILNKEGGIVPFKTKDRDNMVRNVIEPMASEGLRTIGIAYRDFDGEEPSWENENEIFTGLVCIAVVGIEDPVRPEVPDAINKCKRAGITVRMVTGDNVNTARAIATKCGILTPGDDFLCLEGKEFNRLIRNEKGEVEQEKLDKVWPRLRVLARSSPTDKHTLVKGIIDSNIGEQRQVVAVTGDGTNDGPALKKADVGFAMGIAGTDVAKEASDIILTDDNFTSIVKAVMWGRNVYDSISKFLQFQLTVNVVAVIVAFSGACITQDSPLKAVQMLWVNLIMDTFASLALATEPPTDSLLRRRPYGRNKPLISRTMMKNILGHAVYQLGIVFLLVFAGDKLFDIDSGRKAPLNSPPSQHYTIVFNTFVLMQLFNEINSRKIHGEKNVFAGVYRNIIFCSVVLGTFFCQILIVEVGGKPFSCTNLTMEQWMWCLFIGIGELLWGQVISAIPTKSLKFLKEAGHGSDKEEISKDAEGLEEIDHAEMELRRGQILWVRGLNRIQTQIRVVKVFHSFRDVIHKSKNQVSIHSFMTQPEYAADDEMSQSFLNQEESPSLASKSRITKRLSDAETVSQNNTNNNAVDCHQVQIVASHPNSPLQSQETPV.

Residues 1-92 (MTNPSGHNLP…NMIPPKKPKT (92 aa)) lie on the Cytoplasmic side of the membrane. Ser-13 is subject to Phosphoserine. Residues 93–113 (FLELVWEALQDVTLIILEIAA) form a helical membrane-spanning segment. The Extracellular segment spans residues 114–150 (IISLVLSFYRPPGGENEICGHIVSNPEEDEEGETGWI). Residues 151 to 171 (EGAAILASVIIVVFVTAFNDW) form a helical membrane-spanning segment. The Cytoplasmic segment spans residues 172-356 (SKEKQFRGLQ…KEKSVLQGKL (185 aa)). Residues 294-319 (DDEKKKKGKKQGVSENRNKAKTQDGV) are disordered. 2 positions are modified to phosphoserine: Ser-328 and Ser-334. A disordered region spans residues 330–349 (EGLDSEEKEKKASKGPKKEK). A compositionally biased stretch (basic and acidic residues) spans 334–349 (SEEKEKKASKGPKKEK). The chain crosses the membrane as a helical span at residues 357–376 (TRLAVQIGKAGLIMSILTVL). At 377-409 (ILILYFVVDNFVIQRRAWLPECTPVYIQYFVKF) the chain is on the extracellular side. The helical transmembrane segment at 410-427 (FIIGVTVLVVAVPEGLPL) threads the bilayer. The Cytoplasmic portion of the chain corresponds to 428-840 (AVTISLAYSV…MWGRNVYDSI (413 aa)). Asp-465 acts as the 4-aspartylphosphate intermediate in catalysis. Residues Asp-785 and Asp-789 each contribute to the Mg(2+) site. The chain crosses the membrane as a helical span at residues 841–860 (SKFLQFQLTVNVVAVIVAFS). The Extracellular segment spans residues 861–870 (GACITQDSPL). The chain crosses the membrane as a helical span at residues 871 to 891 (KAVQMLWVNLIMDTFASLALA). Over 892–911 (TEPPTDSLLRRRPYGRNKPL) the chain is Cytoplasmic. Residues 912–934 (ISRTMMKNILGHAVYQLGIVFLL) form a helical membrane-spanning segment. Over 935 to 952 (VFAGDKLFDIDSGRKAPL) the chain is Extracellular. A helical transmembrane segment spans residues 953-974 (NSPPSQHYTIVFNTFVLMQLFN). At 975-993 (EINSRKIHGEKNVFAGVYR) the chain is on the cytoplasmic side. The chain crosses the membrane as a helical span at residues 994-1015 (NIIFCSVVLGTFFCQILIVEVG). Residues 1016–1025 (GKPFSCTNLT) are Extracellular-facing. The chain crosses the membrane as a helical span at residues 1026–1047 (MEQWMWCLFIGIGELLWGQVIS). Over 1048–1203 (AIPTKSLKFL…SPLQSQETPV (156 aa)) the chain is Cytoplasmic. Residues Ser-1064 and Ser-1070 each carry the phosphoserine modification. The interval 1086–1103 (LRRGQILWVRGLNRIQTQ) is calmodulin-binding subdomain A. Thr-1102 carries the post-translational modification Phosphothreonine; by PKC. Gln-1103 carries the phosphoserine modification. The interval 1104–1113 (IRVVKVFHSF) is calmodulin-binding subdomain B. A phosphoserine mark is found at Arg-1114, Asp-1115, Ile-1126, and Ser-1144.

This sequence belongs to the cation transport ATPase (P-type) (TC 3.A.3) family. Type IIB subfamily. In terms of assembly, interacts with PDZD11. Interacts with SLC35G1 and STIM1. Interacts with calmodulin. In terms of tissue distribution, ubiquitously expressed. Not detected in liver. The highest levels are found in uterus and stomach. Isoform XA is found in uterus, brain, stomach, small intestine, colon and pancreas. Isoform XB is found in uterus, skeletal muscle, lung, kidney, spleen, stomach, small intestine and pancreas. Isoform ZA is found in testis and isoform ZB is found in testis and heart.

It localises to the cell membrane. It is found in the cell projection. Its subcellular location is the cilium. The protein resides in the flagellum membrane. It catalyses the reaction Ca(2+)(in) + ATP + H2O = Ca(2+)(out) + ADP + phosphate + H(+). With respect to regulation, activated by calcium/calmodulin. Functionally, calcium/calmodulin-regulated and magnesium-dependent enzyme that catalyzes the hydrolysis of ATP coupled with the transport of calcium out of the cell. By regulating sperm cell calcium homeostasis, may play a role in sperm motility. In Rattus norvegicus (Rat), this protein is Plasma membrane calcium-transporting ATPase 4.